Consider the following 124-residue polypeptide: Bactoprenol-linked glucose translocase (124 aa).

4 helical membrane passes run 12-32 (FFSY…VFYA), 45-65 (NIVG…RCSF), 75-95 (FIFI…FDLL), and 96-116 (ALSP…LGYC).

It belongs to the GtrA family.

Its subcellular location is the cell membrane. It functions in the pathway bacterial outer membrane biogenesis; lipopolysaccharide biosynthesis. In terms of biological role, involved in O antigen modification. Involved in the translocation of bactoprenol-linked glucose across the cytoplasmic membrane. The protein is Bactoprenol-linked glucose translocase (rfbI) of Shigella flexneri.